A 290-amino-acid chain; its full sequence is MKVLKVGVLGPTNAGKSTLINFLHNDDSLMVSSMNNTTLLSISTEVINQANKNIVFIDVPGFTEKKHSNYELITKEIRKALSGIDVLLLVVRSDQNNKIEFLKTQLQQLKRYQNLTRIFLINKFHQKSLSEVNKAIILEEFKPQKTIEINLLKFDKNLFWSIFKQVELRYNIFRKDINFIDANNDDFKILEGLREQIIFYCKNEIPHIARIEIIEKSFNKEKNLLKIHLVISVPKLSQKKIIIGKNAEMIKAIGIATRKKLLNHFDCDIFIDIFVKTEKQKLPVYSFLSK.

Residues 2 to 144 (KVLKVGVLGP…AIILEEFKPQ (143 aa)) form the Era-type G domain. A G1 region spans residues 10-17 (GPTNAGKS). GTP is bound at residue 10–17 (GPTNAGKS). The G2 stretch occupies residues 36–40 (NTTLL). A G3 region spans residues 58 to 61 (DVPG). A GTP-binding site is contributed by 58–62 (DVPGF). The tract at residues 97 to 100 (NKIE) is G4. The interval 121–123 (INK) is G5. Residue 122–125 (NKFH) participates in GTP binding. Residues 201 to 279 (CKNEIPHIAR…FIDIFVKTEK (79 aa)) enclose the KH type-2 domain.

The protein belongs to the TRAFAC class TrmE-Era-EngA-EngB-Septin-like GTPase superfamily. Era GTPase family. Monomer.

Its subcellular location is the cytoplasm. The protein resides in the cell membrane. Functionally, an essential GTPase that binds both GDP and GTP, with rapid nucleotide exchange. Plays a role in 16S rRNA processing and 30S ribosomal subunit biogenesis and possibly also in cell cycle regulation and energy metabolism. This chain is GTPase Era, found in Mycoplasma genitalium (strain ATCC 33530 / DSM 19775 / NCTC 10195 / G37) (Mycoplasmoides genitalium).